The sequence spans 23 residues: Cytochrome c oxidase subunit 7A-liver, mitochondrial (23 aa).

The protein belongs to the cytochrome c oxidase VIIa family. In terms of assembly, component of the cytochrome c oxidase (complex IV, CIV), a multisubunit enzyme composed of 14 subunits. The complex is composed of a catalytic core of 3 subunits MT-CO1, MT-CO2 and MT-CO3, encoded in the mitochondrial DNA, and 11 supernumerary subunits COX4I, COX5A, COX5B, COX6A, COX6B, COX6C, COX7A, COX7B, COX7C, COX8 and NDUFA4, which are encoded in the nuclear genome. The complex exists as a monomer or a dimer and forms supercomplexes (SCs) in the inner mitochondrial membrane with NADH-ubiquinone oxidoreductase (complex I, CI) and ubiquinol-cytochrome c oxidoreductase (cytochrome b-c1 complex, complex III, CIII), resulting in different assemblies (supercomplex SCI(1)III(2)IV(1) and megacomplex MCI(2)III(2)IV(2)).

It is found in the mitochondrion inner membrane. Its pathway is energy metabolism; oxidative phosphorylation. Functionally, component of the cytochrome c oxidase, the last enzyme in the mitochondrial electron transport chain which drives oxidative phosphorylation. The respiratory chain contains 3 multisubunit complexes succinate dehydrogenase (complex II, CII), ubiquinol-cytochrome c oxidoreductase (cytochrome b-c1 complex, complex III, CIII) and cytochrome c oxidase (complex IV, CIV), that cooperate to transfer electrons derived from NADH and succinate to molecular oxygen, creating an electrochemical gradient over the inner membrane that drives transmembrane transport and the ATP synthase. Cytochrome c oxidase is the component of the respiratory chain that catalyzes the reduction of oxygen to water. Electrons originating from reduced cytochrome c in the intermembrane space (IMS) are transferred via the dinuclear copper A center (CU(A)) of subunit 2 and heme A of subunit 1 to the active site in subunit 1, a binuclear center (BNC) formed by heme A3 and copper B (CU(B)). The BNC reduces molecular oxygen to 2 water molecules using 4 electrons from cytochrome c in the IMS and 4 protons from the mitochondrial matrix. This chain is Cytochrome c oxidase subunit 7A-liver, mitochondrial, found in Oncorhynchus mykiss (Rainbow trout).